Reading from the N-terminus, the 516-residue chain is 4-hydroxybenzoate brominase (decarboxylating) (516 aa).

FAD is bound by residues S13, E32, V40, F41, H51, V102, and Q365.

The protein belongs to the FMO family. FAD is required as a cofactor.

It catalyses the reaction 2 bromide + 4-hydroxybenzoate + 2 NADPH + 2 O2 + 5 H(+) = 2,4-dibromophenol + CO2 + 2 NADP(+) + 4 H2O. The catalysed reaction is bromide + 4-hydroxybenzoate + NADPH + O2 + 2 H(+) = 3-bromo-4-hydroxybenzoate + NADP(+) + 2 H2O. The enzyme catalyses 3-bromo-4-hydroxybenzoate + bromide + NADPH + O2 + 3 H(+) = 2,4-dibromophenol + CO2 + NADP(+) + 2 H2O. It carries out the reaction 3,4-dihydroxybenzoate + 2 bromide + 2 NADPH + 2 O2 + 5 H(+) = 3,5-dibromobenzene-1,2-diol + CO2 + 2 NADP(+) + 4 H2O. It catalyses the reaction 3,4-dihydroxybenzoate + bromide + NADPH + O2 + 2 H(+) = 3-bromo-4,5-dihydroxybenzoate + NADP(+) + 2 H2O. The catalysed reaction is 3-bromo-4,5-dihydroxybenzoate + bromide + NADPH + O2 + 3 H(+) = 3,5-dibromobenzene-1,2-diol + CO2 + NADP(+) + 2 H2O. Functionally, brominase involved in the biosynthesis of polybrominated aromatic organic compounds. Catalyzes the bromination of 4-hydroxybenzoate (4-HBA) to 3-bromo-4-hydroxybenzoate, followed by bromination and decarboxylation of 3-bromo-4-hydroxybenzoate to 2,4-dibromophenol. Can also use 3,4-dihydroxybenzoate, with lower efficiency, forming 3-bromo-4,5-dihydroxybenzoate and 3,5-dibromobenzene-1,2-diol. The protein is 4-hydroxybenzoate brominase (decarboxylating) of Marinomonas mediterranea (strain ATCC 700492 / JCM 21426 / NBRC 103028 / MMB-1).